Consider the following 481-residue polypeptide: Autolysin (481 aa).

In terms of domain architecture, Peptidase C51 spans 7–142 (KNEFIERLKT…LQDDNMLMIS (136 aa)). Positions 198–323 (SNPKGIVIHN…NEFTSTSCPH (126 aa)) constitute an N-acetylmuramoyl-L-alanine amidase domain. An SH3b domain is found at 398-466 (EESARFTNGN…YLPIRTWNGS (69 aa)).

Belongs to the N-acetylmuramoyl-L-alanine amidase 2 family.

The protein localises to the secreted. It carries out the reaction Hydrolyzes the link between N-acetylmuramoyl residues and L-amino acid residues in certain cell-wall glycopeptides.. In terms of biological role, autolysins are involved in some important biological processes such as cell separation, cell-wall turnover, competence for genetic transformation, formation of the flagella and sporulation. Autolysin strictly depends on the presence of choline-containing cell walls for activity. This Staphylococcus aureus protein is Autolysin (lytA).